The sequence spans 75 residues: UPF0352 protein VIBHAR_03027 (75 aa).

Belongs to the UPF0352 family.

The chain is UPF0352 protein VIBHAR_03027 from Vibrio campbellii (strain ATCC BAA-1116).